The primary structure comprises 1439 residues: Mediator of RNA polymerase II transcription subunit 23 (1439 aa).

The stretch at 282-318 (SQMLNLQKHQKQRYNALEEQLVNLIVQAMEMTEANDA) forms a coiled coil. The interval 358 to 625 (HIVLALHEKL…HHVPTHYRVQ (268 aa)) is interaction with Hsf. Disordered stretches follow at residues 1338-1372 (NDNTSNNAITSQTQSPMQTQHQQQPQQPHQQQQQQ) and 1401-1439 (SVPLGSGGNLQQQQQINQQQQMYMQHMQQHQHMQNMRHN). 2 stretches are compositionally biased toward low complexity: residues 1348 to 1372 (SQTQSPMQTQHQQQPQQPHQQQQQQ) and 1411 to 1439 (QQQQQINQQQQMYMQHMQQHQHMQNMRHN).

It belongs to the Mediator complex subunit 23 family. In terms of assembly, component of the Mediator complex. Interacts with Hsf.

The protein resides in the nucleus. Its function is as follows. Component of the Mediator complex, a coactivator involved in the regulated transcription of nearly all RNA polymerase II-dependent genes. Mediator functions as a bridge to convey information from gene-specific regulatory proteins to the basal RNA polymerase II transcription machinery. Mediator is recruited to promoters by direct interactions with regulatory proteins and serves as a scaffold for the assembly of a functional preinitiation complex with RNA polymerase II and the general transcription factors. Required for transcriptional activation in response to heat shock. The polypeptide is Mediator of RNA polymerase II transcription subunit 23 (MED23) (Drosophila melanogaster (Fruit fly)).